Here is a 77-residue protein sequence, read N- to C-terminus: uncharacterized protein (77 aa).

2 helical membrane-spanning segments follow: residues 3-23 and 35-55; these read FNFIEFLGYMATFFVAASFLF and IGAILFVIYSLIITAYPVALL.

The protein localises to the cell membrane. This is an uncharacterized protein from Haemophilus influenzae (strain ATCC 51907 / DSM 11121 / KW20 / Rd).